The primary structure comprises 117 residues: Large ribosomal subunit protein bL20 (117 aa).

The protein belongs to the bacterial ribosomal protein bL20 family.

Its function is as follows. Binds directly to 23S ribosomal RNA and is necessary for the in vitro assembly process of the 50S ribosomal subunit. It is not involved in the protein synthesizing functions of that subunit. The sequence is that of Large ribosomal subunit protein bL20 from Vibrio metschnikovii.